A 566-amino-acid polypeptide reads, in one-letter code: Mucin-21 (566 aa).

The signal sequence occupies residues 1–24; sequence MKMQKGNVLLMFGLLLHLEAATNS. The N-linked (GlcNAc...) asparagine glycan is linked to Asn-25. A disordered region spans residues 25-68; that stretch reads NETSTSANTGSSVISSGASTATNSGSSVTSSGVSTATISGSSVT. At 25-479 the chain is on the extracellular side; sequence NETSTSANTG…KPGGSLVPWE (455 aa). Tandem repeats lie at residues 31-44, 45-59, 60-74, 75-89, 90-104, 105-119, 120-134, 135-149, 150-164, 165-179, 180-194, 195-209, 210-224, 225-239, 244-254, 255-269, 270-284, 285-299, 300-314, 315-329, 330-344, 345-359, 360-374, 375-389, 390-404, 405-419, 420-434, and 435-449. The interval 31–435 is 28 X 15 AA approximate tandem repeats; sequence ANTGSSVISS…STTSSGANTA (405 aa). The segment at 106–456 is disordered; sequence TNSESSTTSS…SGTAALTGMH (351 aa). Residues 480–500 form a helical membrane-spanning segment; the sequence is IFLITLVSVVAAVGLFAGLFF. Residues 501–566 lie on the Cytoplasmic side of the membrane; sequence CVRNSLSLRN…MEMSGRNSGP (66 aa). A cytoplasmic tail region spans residues 521–566; the sequence is GLNHGLGPGPGGNHGAPHRPRWSPNWFWRRPVSSIAMEMSGRNSGP.

Post-translationally, O-glycosylated. In terms of tissue distribution, expressed in lung, large intestine, thymus, and testis. Expressed in normal and malignant bronchial epithelial cells.

It is found in the cell membrane. The chain is Mucin-21 (MUC21) from Homo sapiens (Human).